The sequence spans 297 residues: Tumor necrosis factor receptor superfamily member 27 (297 aa).

Residues 1–138 lie on the Extracellular side of the membrane; that stretch reads MDCQENEYRD…AHTVPPREAT (138 aa). TNFR-Cys repeat units follow at residues 2–41, 43–83, and 85–118; these read DCQE…DAHC, VCPP…NAIC, and DCLP…EVQC. 8 disulfides stabilise this stretch: Cys-3-Cys-15, Cys-18-Cys-31, Cys-21-Cys-41, Cys-44-Cys-58, Cys-61-Cys-75, Cys-64-Cys-83, Cys-86-Cys-104, and Cys-107-Cys-118. Residues Asn-74 and Asn-77 are each glycosylated (N-linked (GlcNAc...) asparagine). The chain crosses the membrane as a helical; Signal-anchor for type III membrane protein span at residues 139 to 159; the sequence is LVALVGSLLVVFALAFLGLFF. At 160–297 the chain is on the cytoplasmic side; it reads LYCKQIFNRH…LYVPFEVPSL (138 aa).

In terms of assembly, associates with TRAF1, TRAF3 and TRAF6.

Its subcellular location is the membrane. Receptor for EDA isoform A2, but not for EDA isoform A1. Mediates the activation of the NF-kappa-B and JNK pathways. Activation seems to be mediated by binding to TRAF3 and TRAF6. In Mus musculus (Mouse), this protein is Tumor necrosis factor receptor superfamily member 27 (Eda2r).